Consider the following 109-residue polypeptide: Transcription initiation factor IIA subunit 2 (109 aa).

It belongs to the TFIIA subunit 2 family. As to quaternary structure, TFIIA is a heterodimer composed of the large toa1 and the small toa2 subunits.

The protein resides in the nucleus. It is found in the cytoplasm. TFIIA is a component of the transcription machinery of RNA polymerase II and plays an important role in transcriptional activation. TFIIA in a complex with tbp mediates transcriptional activity. The sequence is that of Transcription initiation factor IIA subunit 2 (toa2) from Schizosaccharomyces pombe (strain 972 / ATCC 24843) (Fission yeast).